The primary structure comprises 427 residues: 3-phosphoshikimate 1-carboxyvinyltransferase (427 aa).

3 residues coordinate 3-phosphoshikimate: Lys23, Ser24, and Arg28. Lys23 lines the phosphoenolpyruvate pocket. Phosphoenolpyruvate is bound by residues Gly97 and Arg125. The 3-phosphoshikimate site is built by Ser170, Ser171, Gln172, Ser198, Asp314, Asn337, and Lys341. Residue Gln172 coordinates phosphoenolpyruvate. Asp314 serves as the catalytic Proton acceptor. Residues Arg345, Arg387, and Lys412 each contribute to the phosphoenolpyruvate site.

This sequence belongs to the EPSP synthase family. In terms of assembly, monomer.

The protein localises to the cytoplasm. The enzyme catalyses 3-phosphoshikimate + phosphoenolpyruvate = 5-O-(1-carboxyvinyl)-3-phosphoshikimate + phosphate. Its pathway is metabolic intermediate biosynthesis; chorismate biosynthesis; chorismate from D-erythrose 4-phosphate and phosphoenolpyruvate: step 6/7. Its function is as follows. Catalyzes the transfer of the enolpyruvyl moiety of phosphoenolpyruvate (PEP) to the 5-hydroxyl of shikimate-3-phosphate (S3P) to produce enolpyruvyl shikimate-3-phosphate and inorganic phosphate. The polypeptide is 3-phosphoshikimate 1-carboxyvinyltransferase (Buchnera aphidicola subsp. Acyrthosiphon pisum (strain 5A)).